We begin with the raw amino-acid sequence, 490 residues long: Lysine--tRNA ligase (490 aa).

Glu398 and Glu405 together coordinate Mg(2+).

Belongs to the class-II aminoacyl-tRNA synthetase family. In terms of assembly, homodimer. Mg(2+) serves as cofactor.

It localises to the cytoplasm. It carries out the reaction tRNA(Lys) + L-lysine + ATP = L-lysyl-tRNA(Lys) + AMP + diphosphate. The chain is Lysine--tRNA ligase from Metamycoplasma arthritidis (strain 158L3-1) (Mycoplasma arthritidis).